Here is a 394-residue protein sequence, read N- to C-terminus: Putative agmatinase 1 (394 aa).

The N-terminal stretch at 1–20 is a signal peptide; that stretch reads MALQSLFLILLAGAAQLAQA. Residues His-186, Asp-209, His-211, Asp-213, Asp-307, and Asp-309 each coordinate Mn(2+).

This sequence belongs to the arginase family. It depends on Mn(2+) as a cofactor.

It catalyses the reaction agmatine + H2O = urea + putrescine. The polypeptide is Putative agmatinase 1 (Schizosaccharomyces pombe (strain 972 / ATCC 24843) (Fission yeast)).